The following is a 190-amino-acid chain: Peptidyl-tRNA hydrolase (190 aa).

Phe14 provides a ligand contact to tRNA. His19 serves as the catalytic Proton acceptor. The tRNA site is built by Met64, Asn66, and Asn112.

Belongs to the PTH family. In terms of assembly, monomer.

It localises to the cytoplasm. The catalysed reaction is an N-acyl-L-alpha-aminoacyl-tRNA + H2O = an N-acyl-L-amino acid + a tRNA + H(+). Functionally, hydrolyzes ribosome-free peptidyl-tRNAs (with 1 or more amino acids incorporated), which drop off the ribosome during protein synthesis, or as a result of ribosome stalling. Its function is as follows. Catalyzes the release of premature peptidyl moieties from peptidyl-tRNA molecules trapped in stalled 50S ribosomal subunits, and thus maintains levels of free tRNAs and 50S ribosomes. The sequence is that of Peptidyl-tRNA hydrolase from Staphylococcus saprophyticus subsp. saprophyticus (strain ATCC 15305 / DSM 20229 / NCIMB 8711 / NCTC 7292 / S-41).